Here is a 207-residue protein sequence, read N- to C-terminus: MSLFITFEGGEGCGKSTQSKALYRYLKKLGLGCVLTHEPGGTRSGDKITRLLKWSEEENISPLAELFLFNASRSILIDNVIKPALLDGNIVICDRYTDSTLAYQGYGRGLELDTVKCINSLASGGLVPDLTIWLDMDDKAALLRKGKLPPDRFESENNGFHQRVRDGFGVIAAAEPNRFLKLDASLSQSELTKCIKQRVNALLKLPQ.

G9–S16 contacts ATP.

This sequence belongs to the thymidylate kinase family.

It carries out the reaction dTMP + ATP = dTDP + ADP. Phosphorylation of dTMP to form dTDP in both de novo and salvage pathways of dTTP synthesis. In Dehalococcoides mccartyi (strain ATCC BAA-2266 / KCTC 15142 / 195) (Dehalococcoides ethenogenes (strain 195)), this protein is Thymidylate kinase.